The following is a 113-amino-acid chain: Class I hydrophobin 1 (113 aa).

The signal sequence occupies residues 1-17 (MQFKFLSTVALATLAVA). 4 disulfides stabilise this stretch: C32/C92, C39/C86, C40/C73, and C93/C106.

It belongs to the fungal hydrophobin family. In terms of assembly, self-assembles to form functional amyloid fibrils called rodlets. Self-assembly into fibrillar rodlets occurs spontaneously at hydrophobic:hydrophilic interfaces and the rodlets further associate laterally to form amphipathic monolayers.

It is found in the secreted. The protein resides in the cell wall. Its function is as follows. Aerial growth, conidiation, and dispersal of filamentous fungi in the environment rely upon a capability of their secreting small amphipathic proteins called hydrophobins (HPBs) with low sequence identity. Class I can self-assemble into an outermost layer of rodlet bundles on aerial cell surfaces, conferring cellular hydrophobicity that supports fungal growth, development and dispersal; whereas Class II form highly ordered films at water-air interfaces through intermolecular interactions but contribute nothing to the rodlet structure. CoH1 is an asexual monokaryon-specific class I hydrophobin that is involved in aerial growth of mycelia. This chain is Class I hydrophobin 1, found in Coprinopsis cinerea (Inky cap fungus).